We begin with the raw amino-acid sequence, 358 residues long: Glutamine synthetase (358 aa).

One can recognise a GS beta-grasp domain in the interval 26 to 105 (ILAEYIWIDG…VLAECWNADG (80 aa)). Residues 112 to 358 (HRHECAKIME…IMMETICGGI (247 aa)) enclose the GS catalytic domain.

It belongs to the glutamine synthetase family. Homooctamer.

The protein resides in the cytoplasm. The enzyme catalyses L-glutamate + NH4(+) + ATP = L-glutamine + ADP + phosphate + H(+). This chain is Glutamine synthetase (GLN1), found in Tuber borchii (White truffle).